Here is a 170-residue protein sequence, read N- to C-terminus: Shikimate kinase (170 aa).

15-20 (GAGKTT) contacts ATP. Threonine 19 provides a ligand contact to Mg(2+). Substrate contacts are provided by aspartate 37, arginine 61, and glycine 83. Arginine 121 contributes to the ATP binding site. Arginine 140 serves as a coordination point for substrate.

Belongs to the shikimate kinase family. As to quaternary structure, monomer. Mg(2+) is required as a cofactor.

The protein localises to the cytoplasm. It catalyses the reaction shikimate + ATP = 3-phosphoshikimate + ADP + H(+). The protein operates within metabolic intermediate biosynthesis; chorismate biosynthesis; chorismate from D-erythrose 4-phosphate and phosphoenolpyruvate: step 5/7. Its function is as follows. Catalyzes the specific phosphorylation of the 3-hydroxyl group of shikimic acid using ATP as a cosubstrate. In Neisseria gonorrhoeae (strain ATCC 700825 / FA 1090), this protein is Shikimate kinase.